Here is a 233-residue protein sequence, read N- to C-terminus: MIDPGHGGQDPGAINSLGLQEKKITLKIGIKLKNLLQNSDLFYPVLTRNDDSYVSLKKRRDFLKNNHVSFLISIHADSSKKRYVSGASIWITTNDRMHREINNFIKNREENIYFPKNIQNLIQKNKHDFFLKKTVLDLQFNNFQKMEINLSRYIFQQLKKIIKLDKINLNYASLGILSSINTPSMLIETGFITNFLEEKKLRTNKYQNKIANAIYIALKNYFQDRLLSNLRNT.

Positions 1–219 (MIDPGHGGQD…IANAIYIALK (219 aa)) constitute a MurNAc-LAA domain.

Belongs to the N-acetylmuramoyl-L-alanine amidase 3 family.

It localises to the secreted. It carries out the reaction Hydrolyzes the link between N-acetylmuramoyl residues and L-amino acid residues in certain cell-wall glycopeptides.. Cell-wall hydrolase involved in septum cleavage during cell division. This Buchnera aphidicola subsp. Schizaphis graminum (strain Sg) protein is Putative N-acetylmuramoyl-L-alanine amidase (amiB).